The sequence spans 443 residues: Glutamine synthetase (443 aa).

Residues 16–101 (NGVKFIRLQF…LICDVYKPDG (86 aa)) enclose the GS beta-grasp domain. The region spanning 108-443 (PRHVLKRANA…WELENYLNKY (336 aa)) is the GS catalytic domain. Residues glutamate 131 and glutamate 133 each coordinate Mg(2+). Glutamate 183 contributes to the ATP binding site. The Mg(2+) site is built by glutamate 188 and glutamate 195. Residues 239–240 (NG) and glycine 240 contribute to the L-glutamate site. Histidine 244 contacts Mg(2+). Serine 248 contributes to the ATP binding site. L-glutamate is bound by residues arginine 297, glutamate 303, and arginine 315. Residues arginine 315 and arginine 320 each coordinate ATP. Residue glutamate 332 coordinates Mg(2+). Arginine 334 is an L-glutamate binding site.

It belongs to the glutamine synthetase family. Oligomer of 12 subunits arranged in the form of two hexagons. In its feedback-inhibited form, interacts with TnrA in order to block its DNA-binding activity. It depends on Mg(2+) as a cofactor.

It localises to the cytoplasm. The enzyme catalyses L-glutamate + NH4(+) + ATP = L-glutamine + ADP + phosphate + H(+). Inhibited by glutamine. Glutamine synthetase (GS) is an unusual multitasking protein that functions as an enzyme, a transcription coregulator, and a chaperone in ammonium assimilation and in the regulation of genes involved in nitrogen metabolism. It catalyzes the ATP-dependent biosynthesis of glutamine from glutamate and ammonia. Feedback-inhibited GlnA also interacts with and regulates the activity of the transcriptional regulator TnrA. During nitrogen limitation, TnrA is in its DNA-binding active state and turns on the transcription of genes required for nitrogen assimilation. Under conditions of nitrogen excess, feedback-inhibited GlnA forms a stable complex with TnrA, which inhibits its DNA-binding activity. In contrast, feedback-inhibited GlnA acts as a chaperone to stabilize the DNA-binding activity of GlnR, which represses the transcription of nitrogen assimilation genes. This Clostridium saccharobutylicum protein is Glutamine synthetase.